Reading from the N-terminus, the 138-residue chain is Cytosolic calcium-binding protein 2 (138 aa).

Over residues 31-41 (TEVTQQPEESV) the composition is skewed to low complexity. The disordered stretch occupies residues 31–122 (TEVTQQPEES…KKTEVVEEKQ (92 aa)). A run of 6 repeats spans residues 62–68 (VEEAEKK), 71–75 (ETEKK), 92–98 (VEEEEKK), 109–114 (VEEEKK), 118–122 (VEEKQ), and 131–135 (VAVEK). The 6 X 5 AA approximate repeats of V-E-E-K-K stretch occupies residues 62–135 (VEEAEKKDEE…AAAEEVAVEK (74 aa)). A compositionally biased stretch (basic and acidic residues) spans 64–85 (EAEKKDEETEKKTEEKDEKTEV). The span at 110 to 122 (EEEKKTEVVEEKQ) shows a compositional bias: basic and acidic residues.

As to expression, predominantly expressed in roots (e.g. in endodermis in the stele) and stems, to a lower extent in shoots, flowers and siliques, and, at low levels, in leaves.

It is found in the cytoplasm. Its subcellular location is the cytosol. Functionally, binds calcium Ca(2+) and may act as a signal mediator to buffer Ca(2+). The polypeptide is Cytosolic calcium-binding protein 2 (Arabidopsis thaliana (Mouse-ear cress)).